A 224-amino-acid polypeptide reads, in one-letter code: Peroxiredoxin-6 (224 aa).

The region spanning Leu5–Leu169 is the Thioredoxin domain. The tract at residues Asp31–Pro40 is required and sufficient for targeting to lysosomes and lamellar bodies. Thr44 is subject to Phosphothreonine. The active-site Cysteine sulfenic acid (-SOH) intermediate; for peroxidase activity is Cys47. Lys63 bears the N6-acetyllysine mark. Residue Tyr89 is modified to Phosphotyrosine. Asp140 serves as the catalytic For phospholipase activity. Thr177 carries the phosphothreonine; by MAPK modification. N6-acetyllysine; alternate is present on Lys209. Lys209 bears the N6-succinyllysine; alternate mark.

It belongs to the peroxiredoxin family. Prx6 subfamily. In terms of assembly, homodimer. Interacts with GSTP1; mediates PRDX6 glutathionylation and regeneration. Interacts with APEX1. Interacts with STH. May interact with FAM168B. May interact with HTR2A. In terms of processing, irreversibly inactivated by overoxidation of Cys-47 to sulfinic acid (Cys-SO(2)H) and sulfonic acid (Cys-SO(3)H) forms upon oxidative stress. Post-translationally, phosphorylation at Thr-177 by MAP kinases increases the phospholipase activity of the enzyme. The phosphorylated form exhibits a greater lysophosphatidylcholine acyltransferase activity compared to the non-phosphorylated form.

It localises to the cytoplasm. The protein localises to the lysosome. The enzyme catalyses a hydroperoxide + 2 glutathione = an alcohol + glutathione disulfide + H2O. It carries out the reaction a 1,2-diacyl-sn-glycero-3-phosphocholine + H2O = a 1-acyl-sn-glycero-3-phosphocholine + a fatty acid + H(+). It catalyses the reaction a 1-acyl-sn-glycero-3-phosphocholine + an acyl-CoA = a 1,2-diacyl-sn-glycero-3-phosphocholine + CoA. The catalysed reaction is 1-hexadecanoyl-sn-glycero-3-phosphocholine + hexadecanoyl-CoA = 1,2-dihexadecanoyl-sn-glycero-3-phosphocholine + CoA. The enzyme catalyses 1,2-dihexadecanoyl-sn-glycero-3-phosphocholine + H2O = 1-hexadecanoyl-sn-glycero-3-phosphocholine + hexadecanoate + H(+). Functionally, thiol-specific peroxidase that catalyzes the reduction of hydrogen peroxide and organic hydroperoxides to water and alcohols, respectively. Can reduce H(2)O(2) and short chain organic, fatty acid, and phospholipid hydroperoxides. Also has phospholipase activity, and can therefore either reduce the oxidized sn-2 fatty acyl group of phospholipids (peroxidase activity) or hydrolyze the sn-2 ester bond of phospholipids (phospholipase activity). These activities are dependent on binding to phospholipids at acidic pH and to oxidized phospholipds at cytosolic pH. Plays a role in cell protection against oxidative stress by detoxifying peroxides and in phospholipid homeostasis. Exhibits acyl-CoA-dependent lysophospholipid acyltransferase which mediates the conversion of lysophosphatidylcholine (1-acyl-sn-glycero-3-phosphocholine or LPC) into phosphatidylcholine (1,2-diacyl-sn-glycero-3-phosphocholine or PC). Shows a clear preference for LPC as the lysophospholipid and for palmitoyl CoA as the fatty acyl substrate. This Sus scrofa (Pig) protein is Peroxiredoxin-6 (PRDX6).